The primary structure comprises 122 residues: Protein NIM1-INTERACTING 2 (122 aa).

The segment covering 1-22 (MNNSLKKEERVEEDNGKSDGNR) has biased composition (basic and acidic residues). Residues 1–28 (MNNSLKKEERVEEDNGKSDGNRGKPSTE) are disordered. The interval 39–45 (DEFFKIL) is involved in NPR1/NIM1 interaction. A Nuclear localization signal motif is present at residues 70 to 74 (KKRKR).

As to quaternary structure, interacts with NPR1 N-terminal region.

The protein resides in the nucleus. In Arabidopsis thaliana (Mouse-ear cress), this protein is Protein NIM1-INTERACTING 2.